The following is a 176-amino-acid chain: MSMRKIYLISDTHFNHANIIKYCNRPFSNVEEMNKTLIKNWNNVVRDKDIVYFLGDLILSKNKAKKARELLELLNGEIVFIRGNHDKFGEKFRVIEYNGYKFMLIHNPDSSYTLNFDGWIIHGHHHANHLDEYPFINPKRKSINVSVEVINYKPVSLDLIVKLIEKGKVVRTINDL.

This is an uncharacterized protein from Methanocaldococcus jannaschii (strain ATCC 43067 / DSM 2661 / JAL-1 / JCM 10045 / NBRC 100440) (Methanococcus jannaschii).